The chain runs to 354 residues: 3'-5' exonuclease (354 aa).

The segment at 1–120 (MEKYLIKMPI…PSPEKEKPEK (120 aa)) is disordered. The span at 36–50 (TKKDTPKELKDKENA) shows a compositional bias: basic and acidic residues. Over residues 59–70 (TKGRPGRPAVKR) the composition is skewed to basic residues. Residues 71–91 (KNLDNPDAKAEKKATEEENPP) are compositionally biased toward basic and acidic residues. A phosphoserine mark is found at Ser-104, Ser-110, and Ser-112. The region spanning 146 to 314 (VLQWVEKQKD…GQVIYRELER (169 aa)) is the 3'-5' exonuclease domain. Mg(2+)-binding residues include Asp-163, Glu-165, and Asp-301.

This sequence belongs to the WRNexo family.

It is found in the nucleus. In terms of biological role, has exonuclease activity on both single-stranded and duplex templates bearing overhangs, but not blunt ended duplex DNA, and cleaves in a 3'-5' direction. Essential for the formation of DNA replication focal centers. Has an important role in maintaining genome stability. The protein is 3'-5' exonuclease of Drosophila yakuba (Fruit fly).